Here is a 731-residue protein sequence, read N- to C-terminus: T-cell activation Rho GTPase-activating protein (731 aa).

The Rho-GAP domain occupies 88–277; that stretch reads QPLSIICGDS…FLIDNCFEIF (190 aa). Disordered regions lie at residues 288–421, 464–507, and 641–662; these read TSDD…AEDP, SLDA…IKKH, and HHVEDSRHRGSKEPLPGHGLSP. Over residues 299–311 the composition is skewed to polar residues; the sequence is SDVSTLQNDSAYD. Positions 319-329 are enriched in low complexity; sequence SNSSSGISSPS. The segment covering 380-399 has biased composition (polar residues); sequence SMPSSQECLESRVTNQTLTK. A Phosphoserine modification is found at Ser400. Over residues 464–480 the composition is skewed to low complexity; the sequence is SLDASSDSSPVASPSSP. Composition is skewed to basic and acidic residues over residues 494-503 and 641-652; these read KTEKGKPSRE and HHVEDSRHRGSK.

In terms of biological role, may function as a GTPase-activating protein and may play important roles during T-cell activation. This chain is T-cell activation Rho GTPase-activating protein (TAGAP), found in Homo sapiens (Human).